Reading from the N-terminus, the 802-residue chain is Aldehyde dehydrogenase family 16 member A1 (802 aa).

Belongs to the aldehyde dehydrogenase family. In terms of assembly, interacts with SPG21.

The polypeptide is Aldehyde dehydrogenase family 16 member A1 (Aldh16a1) (Mus musculus (Mouse)).